A 171-amino-acid polypeptide reads, in one-letter code: Crossover junction endodeoxyribonuclease RuvC (171 aa).

Residues aspartate 7, glutamate 66, and aspartate 138 contribute to the active site. Mg(2+)-binding residues include aspartate 7, glutamate 66, and aspartate 138.

It belongs to the RuvC family. In terms of assembly, homodimer which binds Holliday junction (HJ) DNA. The HJ becomes 2-fold symmetrical on binding to RuvC with unstacked arms; it has a different conformation from HJ DNA in complex with RuvA. In the full resolvosome a probable DNA-RuvA(4)-RuvB(12)-RuvC(2) complex forms which resolves the HJ. Mg(2+) serves as cofactor.

It is found in the cytoplasm. It catalyses the reaction Endonucleolytic cleavage at a junction such as a reciprocal single-stranded crossover between two homologous DNA duplexes (Holliday junction).. In terms of biological role, the RuvA-RuvB-RuvC complex processes Holliday junction (HJ) DNA during genetic recombination and DNA repair. Endonuclease that resolves HJ intermediates. Cleaves cruciform DNA by making single-stranded nicks across the HJ at symmetrical positions within the homologous arms, yielding a 5'-phosphate and a 3'-hydroxyl group; requires a central core of homology in the junction. The consensus cleavage sequence is 5'-(A/T)TT(C/G)-3'. Cleavage occurs on the 3'-side of the TT dinucleotide at the point of strand exchange. HJ branch migration catalyzed by RuvA-RuvB allows RuvC to scan DNA until it finds its consensus sequence, where it cleaves and resolves the cruciform DNA. The sequence is that of Crossover junction endodeoxyribonuclease RuvC from Thiobacillus denitrificans (strain ATCC 25259 / T1).